Consider the following 277-residue polypeptide: MDIQTVLSDLKLNGKVIPVVGGDVNQTYRIKTEHRAYFLKIHPNVKKGFFEAEVDGLKELSAFVRVPDTYMLGETSEGAYLLMEWIEPGKGDQRDLAAALANLHQQTAPQFGFRKDNYLGTLVQKNSFEEDWWTFFFKDRLESQISLAEETNRWNVQRQEKYLRFKERVLKSVEPKKITPRLLHGDLWSGNVFFDQQGHPVFVDPAVSYGNREQDIAMSQLFGGFRPEFLDAYQTIFPLEKGWKDRLPIYQLYYLLAHLNMFGESYGSQVDQLLENF.

ATP is bound at residue 84 to 86; the sequence is EWI. The active-site Proton acceptor is D186.

This sequence belongs to the fructosamine kinase family.

It carries out the reaction N(6)-(D-ribulosyl)-L-lysine + ATP = N(6)-(3-O-phospho-D-ribulosyl)-L-lysine + ADP + H(+). The enzyme catalyses N-(D-ribulosyl)-cadaverine + ATP = N-(3-O-phospho-D-ribulosyl)-cadaverine + ADP + H(+). The catalysed reaction is N(6)-(D-erythrulosyl)-L-lysine + ATP = N(6)-(3-O-phospho-D-erythrulosyl)-L-lysine + ADP + H(+). It catalyses the reaction N-(D-erythrulosyl)-cadaverine + ATP = N-(3-O-phospho-D-erythrulosyl)-cadaverine + ADP + H(+). It carries out the reaction N(6)-D-ribulosyl-L-lysyl-[protein] + ATP = N(6)-(3-O-phospho-D-ribulosyl)-L-lysyl-[protein] + ADP + H(+). The enzyme catalyses N(6)-(D-erythrulosyl)-L-lysyl-[protein] + ATP = N(6)-(3-O-phospho-D-erythrulosyl)-L-lysyl-[protein] + ADP + H(+). Functionally, ketoamine kinase that phosphorylates ketoamines, such as erythruloselysine, erythrulosecadaverine, ribuloselysine and ribulosecadaverine, on the third carbon of the sugar moiety to generate ketoamine 3-phosphate. Has higher activity on free lysine (erythruloselysine and ribuloselysine), than on ribuloselysine and erythruloselysine residues on glycated proteins. This is Probable ketoamine kinase HMPREF0351_12196 from Enterococcus faecium (strain ATCC BAA-472 / TX0016 / DO).